Here is a 73-residue protein sequence, read N- to C-terminus: U3-agatoxin-Ao1j (73 aa).

The first 20 residues, methionine 1–alanine 20, serve as a signal peptide directing secretion. The propeptide occupies isoleucine 21–arginine 34. Cystine bridges form between cysteine 36-cysteine 52, cysteine 43-cysteine 57, cysteine 51-cysteine 67, and cysteine 59-cysteine 65. Serine amide is present on serine 71.

This sequence belongs to the neurotoxin 07 (Beta/delta-agtx) family. 03 (aga-4) subfamily. Aga sub-subfamily. As to expression, expressed by the venom gland.

It is found in the secreted. In terms of biological role, insecticidal neurotoxin that induces an irreversible spastic paralysis when injected into insects. Modifies presynaptic voltage-gated sodium channels (Nav), causing them to open at the normal resting potential of the nerve. This leads to spontaneous release of neurotransmitter and repetitive action potentials in motor neurons. The protein is U3-agatoxin-Ao1j of Agelena orientalis (Funnel-web spider).